The primary structure comprises 93 residues: Neutrophil cationic peptide 1 type B (93 aa).

An N-terminal signal peptide occupies residues 1–19 (MRTVPLFAACLLLTLMAQA). The propeptide occupies 20-62 (EPLPRAADHSDTKMKGDREDHVAVISFWEEESTSLQDAGAGAG). Cystine bridges form between Cys-65-Cys-93, Cys-67-Cys-82, and Cys-72-Cys-92.

This sequence belongs to the alpha-defensin family. Bone marrow.

It is found in the secreted. Its function is as follows. Has antibiotic, anti-fungi and antiviral activity. This is Neutrophil cationic peptide 1 type B from Cavia porcellus (Guinea pig).